The following is a 126-amino-acid chain: MYRTLLKSKIHRVKTTHCELHYEGSCAIDEDLLEAANICENEQVHIWNVDNGERFVTYAIKGQRGSGMISVNGSAARRACVGDLLIIAAFAQVAEADVAAHQPQLVFVNDQNRQVELRHHVPTQAL.

Ser-25 serves as the catalytic Schiff-base intermediate with substrate; via pyruvic acid. The residue at position 25 (Ser-25) is a Pyruvic acid (Ser). Residue Thr-57 coordinates substrate. Tyr-58 acts as the Proton donor in catalysis. A substrate-binding site is contributed by 73–75 (GSA).

The protein belongs to the PanD family. In terms of assembly, heterooctamer of four alpha and four beta subunits. The cofactor is pyruvate. In terms of processing, is synthesized initially as an inactive proenzyme, which is activated by self-cleavage at a specific serine bond to produce a beta-subunit with a hydroxyl group at its C-terminus and an alpha-subunit with a pyruvoyl group at its N-terminus.

Its subcellular location is the cytoplasm. It catalyses the reaction L-aspartate + H(+) = beta-alanine + CO2. The protein operates within cofactor biosynthesis; (R)-pantothenate biosynthesis; beta-alanine from L-aspartate: step 1/1. Its function is as follows. Catalyzes the pyruvoyl-dependent decarboxylation of aspartate to produce beta-alanine. The chain is Aspartate 1-decarboxylase from Acidovorax ebreus (strain TPSY) (Diaphorobacter sp. (strain TPSY)).